Consider the following 850-residue polypeptide: Tripartite terminase subunit 1 (850 aa).

A C3H1-type zinc finger spans residues 191–219; sequence CAQCYEELTIIPNQGRSLNKRLQGLLCNH. Positions 438 to 489 are disordered; that stretch reads GTTLMTASNSSNSSTHSQRNNGGGGRARGGGKKVVGGGVNGQDGDGSENGLR. Positions 439 to 457 are enriched in low complexity; the sequence is TTLMTASNSSNSSTHSQRN. Over residues 458-481 the composition is skewed to gly residues; sequence NGGGGRARGGGKKVVGGGVNGQDG. Residue 709 to 716 coordinates ATP; sequence YNETFGKQ. A disordered region spans residues 801–831; it reads WLPSPYPSSSTAGVSRRVRATRKRPRRASSL. The segment covering 816-827 has biased composition (basic residues); it reads RRVRATRKRPRR. The Nuclear localization signal motif lies at 822–827; the sequence is RKRPRR.

This sequence belongs to the herpesviridae TRM1 protein family. Associates with TRM2 and TRM3 to form the tripartite terminase complex. Interacts with portal protein.

It localises to the host nucleus. Functionally, component of the molecular motor that translocates viral genomic DNA in empty capsid during DNA packaging. Forms a tripartite terminase complex together with TRM2 and TRM3 in the host cytoplasm. Once the complex reaches the host nucleus, it interacts with the capsid portal vertex. This portal forms a ring in which genomic DNA is translocated into the capsid. TRM1 carries an endonuclease activity that plays an important role for the cleavage of concatemeric viral DNA into unit length genomes. This chain is Tripartite terminase subunit 1, found in Homo sapiens (Human).